The following is an 81-amino-acid chain: RNA-binding protein Hfq (81 aa).

The Sm domain occupies 10 to 69 (DPFLNTLRKEHIPVSIYLVNGIKLQGHIDSFDQYVVLLKNTVTQMVYKHAISTVVPARAV).

It belongs to the Hfq family. Homohexamer.

Functionally, RNA chaperone that binds small regulatory RNA (sRNAs) and mRNAs to facilitate mRNA translational regulation in response to envelope stress, environmental stress and changes in metabolite concentrations. Also binds with high specificity to tRNAs. This chain is RNA-binding protein Hfq, found in Nitrosospira multiformis (strain ATCC 25196 / NCIMB 11849 / C 71).